Consider the following 226-residue polypeptide: 2-C-methyl-D-erythritol 4-phosphate cytidylyltransferase (226 aa).

The protein belongs to the IspD/TarI cytidylyltransferase family. IspD subfamily.

It carries out the reaction 2-C-methyl-D-erythritol 4-phosphate + CTP + H(+) = 4-CDP-2-C-methyl-D-erythritol + diphosphate. The protein operates within isoprenoid biosynthesis; isopentenyl diphosphate biosynthesis via DXP pathway; isopentenyl diphosphate from 1-deoxy-D-xylulose 5-phosphate: step 2/6. Functionally, catalyzes the formation of 4-diphosphocytidyl-2-C-methyl-D-erythritol from CTP and 2-C-methyl-D-erythritol 4-phosphate (MEP). The protein is 2-C-methyl-D-erythritol 4-phosphate cytidylyltransferase of Rhodococcus opacus (strain B4).